A 492-amino-acid chain; its full sequence is Amphoterin-induced protein 1 (492 aa).

An N-terminal signal peptide occupies residues 1–27 (MQPQRDLRGLWLLLLSVFLLLFEVARA). In terms of domain architecture, LRRNT spans 28–61 (GRSVVSCPANCLCASNILSCSKQQLPNVPQSLPS). At 28 to 371 (GRSVVSCPAN…LHGHHDTLNT (344 aa)) the chain is on the extracellular side. 2 disulfides stabilise this stretch: C34-C40 and C38-C47. 6 LRR repeats span residues 62 to 83 (YTAL…WTPT), 87 to 108 (NLHS…AFVP), 111 to 132 (NLRY…LFSD), 135 to 156 (ALEV…AFED), 159 to 180 (QLQK…LIKD), and 186 to 206 (KLML…TDLQ). A glycan (N-linked (GlcNAc...) asparagine) is linked at N72. One can recognise an LRRCT domain in the interval 208–272 (LPAWVKNGLY…FSLDFFNCSE (65 aa)). 3 cysteine pairs are disulfide-bonded: C225–C253, C227–C270, and C290–C340. N269, N315, N348, and N359 each carry an N-linked (GlcNAc...) asparagine glycan. In terms of domain architecture, Ig-like C2-type spans 269-352 (NCSEYKESAW…MGETFNETLS (84 aa)). Residues 372–392 (AYTTLVGCILSVVLVLIYLYL) form a helical membrane-spanning segment. Residues 393–492 (TPCRCWCRGV…SVFSDTPIVV (100 aa)) lie on the Cytoplasmic side of the membrane. The interval 404–492 (KPSSHQGDSL…SVFSDTPIVV (89 aa)) is disordered. The span at 407 to 423 (SHQGDSLSSSMLSTTPN) shows a compositional bias: polar residues. Residues 430-441 (GDKDDGFDRRVA) are compositionally biased toward basic and acidic residues. S476 and S480 each carry phosphoserine.

Belongs to the immunoglobulin superfamily. AMIGO family. In terms of assembly, homodimer, and heterodimer with AMIGO2 and AMIGO3. Interacts with KCNB1. Expressed in hippocampal and cortical neurons (at protein level). High levels in cerebellum, cerebrum, and retina. Low levels in liver, kidney, small intestine, spleen, lung and heart.

It is found in the cell membrane. The protein resides in the perikaryon. It localises to the cell projection. Its subcellular location is the dendrite. Functionally, promotes growth and fasciculation of neurites from cultured hippocampal neurons. May be involved in fasciculation as well as myelination of developing neural axons. May have a role in regeneration as well as neural plasticity in the adult nervous system. May mediate homophilic as well as heterophilic cell-cell interaction and contribute to signal transduction through its intracellular domain. Assembled with KCNB1 modulates the gating characteristics of the delayed rectifier voltage-dependent potassium channel KCNB1. This Mus musculus (Mouse) protein is Amphoterin-induced protein 1.